Here is a 145-residue protein sequence, read N- to C-terminus: MNWAAAVCWALLLAATFLCDGSAAKGGRGGARGSARGGRGAARVRVRPAPRYAGSSVRAAAGAAAGAAAAAGVAAGLAAGSSWRRAAGPAELGLEDAEDGAPGSNGTGRGVYSYWAWTSGAGPTGHRHLCPLLGGALGALRLLRP.

The signal sequence occupies residues 1–24; sequence MNWAAAVCWALLLAATFLCDGSAA. N105 carries an N-linked (GlcNAc...) asparagine glycan. The GPI-anchor amidated serine moiety is linked to residue S119. Residues 120 to 145 constitute a propeptide, removed in mature form; it reads GAGPTGHRHLCPLLGGALGALRLLRP.

Belongs to the SPRN family. In terms of processing, N-glycosylated. In terms of tissue distribution, mainly expressed in brain.

It localises to the cell membrane. Its function is as follows. Prion-like protein that has PrP(C)-like neuroprotective activity. May act as a modulator for the biological actions of normal and abnormal PrP. This Ovis aries (Sheep) protein is Shadow of prion protein (SPRN).